Here is a 111-residue protein sequence, read N- to C-terminus: UPF0060 membrane protein NFA_36830 (111 aa).

4 helical membrane passes run 7-27 (LVLF…VWQG), 33-53 (GLWW…VATF), 62-82 (VLAA…VLVD), and 91-111 (LLGA…PRGG).

Belongs to the UPF0060 family.

Its subcellular location is the cell membrane. This Nocardia farcinica (strain IFM 10152) protein is UPF0060 membrane protein NFA_36830.